A 386-amino-acid chain; its full sequence is Delta(7)-sterol 5(6)-desaturase ERG3 (386 aa).

Transmembrane regions (helical) follow at residues 120–140, 172–192, and 206–226; these read LSLF…VAYL, IPVM…GYSF, and AILW…YFLH. Residues 214-337 form the Fatty acid hydroxylase domain; sequence FILFTDCGIY…FTTLWDRLGN (124 aa). The Histidine box-1 signature appears at 226-230; that stretch reads HRWLH. The Histidine box-2 signature appears at 239-243; the sequence is HKPHH. Residues 272 to 292 traverse the membrane as a helical segment; sequence PLLFPLHKVLYLFLFTFVNFW. Residues 314 to 318 carry the Histidine box-3 motif; it reads HTVHH.

Belongs to the sterol desaturase family. Fe cation serves as cofactor.

It localises to the endoplasmic reticulum membrane. The catalysed reaction is a Delta(7)-sterol + 2 Fe(II)-[cytochrome b5] + O2 + 2 H(+) = a Delta(5),Delta(7)-sterol + 2 Fe(III)-[cytochrome b5] + 2 H2O. It functions in the pathway steroid metabolism; ergosterol biosynthesis; ergosterol from zymosterol: step 3/5. Its function is as follows. C-5 sterol desaturase; part of the third module of ergosterol biosynthesis pathway that includes the late steps of the pathwa. ERG3 catalyzes the introduction of a C-5 double bond in the B ring to produce 5-dehydroepisterol. The third module or late pathway involves the ergosterol synthesis itself through consecutive reactions that mainly occur in the endoplasmic reticulum (ER) membrane. Firstly, the squalene synthase ERG9 catalyzes the condensation of 2 farnesyl pyrophosphate moieties to form squalene, which is the precursor of all steroids. Squalene synthase is crucial for balancing the incorporation of farnesyl diphosphate (FPP) into sterol and nonsterol isoprene synthesis. Secondly, the squalene epoxidase ERG1 catalyzes the stereospecific oxidation of squalene to (S)-2,3-epoxysqualene, which is considered to be a rate-limiting enzyme in steroid biosynthesis. Then, the lanosterol synthase ERG7 catalyzes the cyclization of (S)-2,3 oxidosqualene to lanosterol, a reaction that forms the sterol core. In the next steps, lanosterol is transformed to zymosterol through a complex process involving various demethylation, reduction and desaturation reactions. The lanosterol 14-alpha-demethylase ERG11 (also known as CYP51) catalyzes C14-demethylation of lanosterol to produce 4,4'-dimethyl cholesta-8,14,24-triene-3-beta-ol, which is critical for ergosterol biosynthesis. The C-14 reductase ERG24 reduces the C14=C15 double bond of 4,4-dimethyl-cholesta-8,14,24-trienol to produce 4,4-dimethyl-cholesta-8,24-dienol. 4,4-dimethyl-cholesta-8,24-dienol is substrate of the C-4 demethylation complex ERG25-ERG26-ERG27 in which ERG25 catalyzes the three-step monooxygenation required for the demethylation of 4,4-dimethyl and 4alpha-methylsterols, ERG26 catalyzes the oxidative decarboxylation that results in a reduction of the 3-beta-hydroxy group at the C-3 carbon to an oxo group, and ERG27 is responsible for the reduction of the keto group on the C-3. ERG28 has a role as a scaffold to help anchor ERG25, ERG26 and ERG27 to the endoplasmic reticulum and ERG29 regulates the activity of the iron-containing C4-methylsterol oxidase ERG25. Then, the sterol 24-C-methyltransferase ERG6 catalyzes the methyl transfer from S-adenosyl-methionine to the C-24 of zymosterol to form fecosterol. The C-8 sterol isomerase ERG2 catalyzes the reaction which results in unsaturation at C-7 in the B ring of sterols and thus converts fecosterol to episterol. The sterol-C5-desaturase ERG3 then catalyzes the introduction of a C-5 double bond in the B ring to produce 5-dehydroepisterol. The C-22 sterol desaturase ERG5 further converts 5-dehydroepisterol into ergosta-5,7,22,24(28)-tetraen-3beta-ol by forming the C-22(23) double bond in the sterol side chain. Finally, ergosta-5,7,22,24(28)-tetraen-3beta-ol is substrate of the C-24(28) sterol reductase ERG4 to produce ergosterol. The sequence is that of Delta(7)-sterol 5(6)-desaturase ERG3 from Candida albicans (strain SC5314 / ATCC MYA-2876) (Yeast).